The primary structure comprises 801 residues: Quinoprotein glucose dehydrogenase A (801 aa).

A signal peptide spans 1–33 (MNQPTSRSGLTTFTVIIIGLLALFLLIGGIWLA). 4 consecutive transmembrane segments (helical) span residues 39-55 (IYYI…AWQL), 59-79 (ASTA…WSVW), 94-108 (ILGI…PAVT), and 119-138 (VALS…SIFN). The active-site Proton acceptor is D471.

Belongs to the bacterial PQQ dehydrogenase family. As to quaternary structure, monomer. Requires pyrroloquinoline quinone as cofactor.

The protein resides in the cell inner membrane. The enzyme catalyses D-glucose + A = D-glucono-1,5-lactone + AH2. In terms of biological role, catalyzes an exceptionally high rate of oxidation of a wide range of aldose sugars, including D-glucose, galactose, arabinose and xylose, and also the disaccharides lactose, cellobiose and maltose. This is Quinoprotein glucose dehydrogenase A (gdhA) from Acinetobacter calcoaceticus.